A 536-amino-acid polypeptide reads, in one-letter code: Cytochrome P450 monooxygenase macC (536 aa).

A helical membrane pass occupies residues 2–22 (ALLYITTAALALLLLFLRAVF). Position 448 (C448) interacts with heme.

It belongs to the cytochrome P450 family. Heme serves as cofactor.

It is found in the membrane. It functions in the pathway secondary metabolite biosynthesis; terpenoid biosynthesis. Functionally, cytochrome P450 monooxygenase; part of the gene cluster that mediates the biosynthesis of macrophorins, isoprenoid epoxycyclohexenones containing cyclized drimane moieties. The first step of the pathway is the synthesis of 6-methylsalicylic acid (6-MSA) by the polyketide synthase macA. 6-MSA is then converted to m-cresol by the decarboxylase macB. The cytochrome P450 monooxygenase macC then catalyzes the oxidation of m-cresol to toluquinol. Epoxidation of toluquinol is then performed by the short chain dehydrogenase macD, with the help of macE, and a further prenylation by macG leads to 7-deacetoxyyanuthone A. The next step is the hydroxylation of C-22 of 7-deacetoxyyanuthone A by the cytochrome P450 monooxygenase macH to yield 22-deacetylyanuthone A. O-Mevalon transferase macI then attaches mevalon to the hydroxyl group of 22-deacetylyanuthone A to produce yanuthone E. The terpene cyclase macJ catalyzes the cyclization of 22-deacetylyanuthone A to macrophorin A. MacJ is also able to catalyze cyclization of yanuthone E and 7-deacetoxyyanuthone A to their corresponding macrophorins. The macJ products can be further modified by macH and macJ, as well as by the FAD-dependent monooxygenase macF, to produce additional macrophorins, including 4'-oxomacrophorin A, 4'-oxomacrophorin D and 4'-oxomacrophorin E. This Penicillium terrestre protein is Cytochrome P450 monooxygenase macC.